Here is a 311-residue protein sequence, read N- to C-terminus: Inositol oxygenase 1 (311 aa).

Over residues 1–11 (MTILIDRHSDQ) the composition is skewed to basic and acidic residues. The segment at 1-29 (MTILIDRHSDQNDAGDEIVEKNQGNGKEE) is disordered. Residues Arg-52 and 109 to 111 (DES) each bind substrate. Fe cation is bound by residues His-122, His-147, and Asp-148. Substrate is bound by residues Lys-151 and 168-169 (GD). The Fe cation site is built by His-220, His-246, and Asp-279. 246-247 (HS) provides a ligand contact to substrate.

It belongs to the myo-inositol oxygenase family. Requires Fe cation as cofactor. Expressed in roots, young leaves, stems, flowers and siliques.

It localises to the cytoplasm. The enzyme catalyses myo-inositol + O2 = D-glucuronate + H2O + H(+). Its pathway is polyol metabolism; myo-inositol degradation into D-glucuronate; D-glucuronate from myo-inositol: step 1/1. Its function is as follows. Catalyzes the oxygenative cleavage of myo-inositol to D-glucuronate. Involved in the biosynthesis of UDP-glucuronic acid (UDP-GlcA), providing nucleotide sugars for cell-wall polymers. May be also involved in plant ascorbate biosynthesis. This chain is Inositol oxygenase 1 (MIOX1), found in Arabidopsis thaliana (Mouse-ear cress).